The following is a 316-amino-acid chain: Beta-ketoacyl-[acyl-carrier-protein] synthase III (316 aa).

Residues Cys-112 and His-243 contribute to the active site. An ACP-binding region spans residues 244-248; the sequence is QANIR. Asn-273 is a catalytic residue.

The protein belongs to the thiolase-like superfamily. FabH family. Homodimer.

It is found in the cytoplasm. The enzyme catalyses malonyl-[ACP] + acetyl-CoA + H(+) = 3-oxobutanoyl-[ACP] + CO2 + CoA. Its pathway is lipid metabolism; fatty acid biosynthesis. Functionally, catalyzes the condensation reaction of fatty acid synthesis by the addition to an acyl acceptor of two carbons from malonyl-ACP. Catalyzes the first condensation reaction which initiates fatty acid synthesis and may therefore play a role in governing the total rate of fatty acid production. Possesses both acetoacetyl-ACP synthase and acetyl transacylase activities. Its substrate specificity determines the biosynthesis of branched-chain and/or straight-chain of fatty acids. This is Beta-ketoacyl-[acyl-carrier-protein] synthase III from Haemophilus ducreyi (strain 35000HP / ATCC 700724).